The primary structure comprises 503 residues: Lysine--tRNA ligase (503 aa).

The short motif at 23–31 is the 'HIGH' region element; sequence PSGPIHVGN. Residues 267 to 271 carry the 'KMSKS' region motif; it reads AMHSS.

It belongs to the class-I aminoacyl-tRNA synthetase family.

The protein resides in the cytoplasm. It carries out the reaction tRNA(Lys) + L-lysine + ATP = L-lysyl-tRNA(Lys) + AMP + diphosphate. In Thermoplasma volcanium (strain ATCC 51530 / DSM 4299 / JCM 9571 / NBRC 15438 / GSS1), this protein is Lysine--tRNA ligase.